The following is a 284-amino-acid chain: Phosphatidylserine decarboxylase proenzyme (284 aa).

Residues D88, H145, and S248 each act as charge relay system; for autoendoproteolytic cleavage activity in the active site. The Schiff-base intermediate with substrate; via pyruvic acid; for decarboxylase activity role is filled by S248. S248 carries the post-translational modification Pyruvic acid (Ser); by autocatalysis.

This sequence belongs to the phosphatidylserine decarboxylase family. PSD-B subfamily. Prokaryotic type I sub-subfamily. As to quaternary structure, heterodimer of a large membrane-associated beta subunit and a small pyruvoyl-containing alpha subunit. Pyruvate is required as a cofactor. In terms of processing, is synthesized initially as an inactive proenzyme. Formation of the active enzyme involves a self-maturation process in which the active site pyruvoyl group is generated from an internal serine residue via an autocatalytic post-translational modification. Two non-identical subunits are generated from the proenzyme in this reaction, and the pyruvate is formed at the N-terminus of the alpha chain, which is derived from the carboxyl end of the proenzyme. The autoendoproteolytic cleavage occurs by a canonical serine protease mechanism, in which the side chain hydroxyl group of the serine supplies its oxygen atom to form the C-terminus of the beta chain, while the remainder of the serine residue undergoes an oxidative deamination to produce ammonia and the pyruvoyl prosthetic group on the alpha chain. During this reaction, the Ser that is part of the protease active site of the proenzyme becomes the pyruvoyl prosthetic group, which constitutes an essential element of the active site of the mature decarboxylase.

It is found in the cell membrane. It carries out the reaction a 1,2-diacyl-sn-glycero-3-phospho-L-serine + H(+) = a 1,2-diacyl-sn-glycero-3-phosphoethanolamine + CO2. Its pathway is phospholipid metabolism; phosphatidylethanolamine biosynthesis; phosphatidylethanolamine from CDP-diacylglycerol: step 2/2. Catalyzes the formation of phosphatidylethanolamine (PtdEtn) from phosphatidylserine (PtdSer). This Delftia acidovorans (strain DSM 14801 / SPH-1) protein is Phosphatidylserine decarboxylase proenzyme.